A 304-amino-acid polypeptide reads, in one-letter code: D-alanine--D-alanine ligase (304 aa).

Positions 104–299 (KMVWLSCGLP…FEALCLAILA (196 aa)) constitute an ATP-grasp domain. 130–185 (ARDLGLPIFVKPVHEGSSMGATKVTEAGQLRAAWELAARYDSLVIAEEFISGQELT) provides a ligand contact to ATP. Mg(2+) is bound by residues Asp253, Glu266, and Asn268.

Belongs to the D-alanine--D-alanine ligase family. The cofactor is Mg(2+). Requires Mn(2+) as cofactor.

Its subcellular location is the cytoplasm. The enzyme catalyses 2 D-alanine + ATP = D-alanyl-D-alanine + ADP + phosphate + H(+). Its pathway is cell wall biogenesis; peptidoglycan biosynthesis. In terms of biological role, cell wall formation. The polypeptide is D-alanine--D-alanine ligase (Azoarcus sp. (strain BH72)).